A 372-amino-acid chain; its full sequence is Beta-1,4-galactosyltransferase 2 (372 aa).

Topologically, residues 1-15 (MSRLLGGTLERVCKA) are cytoplasmic. Residues 16–36 (VLLLCLLHFLVAVILYFDVYA) traverse the membrane as a helical; Signal-anchor for type II membrane protein segment. Over 37–372 (QHLAFFSRFS…GRPPSWPPRG (336 aa)) the chain is Lumenal. Residues 56–97 (PAASSSSSSSNCSRPNATASSSGLPEVPSALPGPTAPTLPPC) form a disordered region. N-linked (GlcNAc...) asparagine glycans are attached at residues Asn66 and Asn71. The segment covering 66 to 78 (NCSRPNATASSSG) has biased composition (polar residues). Cys97 and Cys139 are disulfide-bonded. Residues 150–154 (PFRHR), 189–191 (FNR), 217–218 (VD), and Trp278 each bind UDP-alpha-D-galactose. A disulfide bridge links Cys211 with Cys230. A Mn(2+)-binding site is contributed by Asp218. 280 to 283 (GEDD) is a binding site for N-acetyl-D-glucosamine. His311 serves as a coordination point for Mn(2+). 311-313 (HDR) contributes to the UDP-alpha-D-galactose binding site. Arg323 contributes to the N-acetyl-D-glucosamine binding site. Asn357 carries N-linked (GlcNAc...) asparagine glycosylation.

This sequence belongs to the glycosyltransferase 7 family. Mn(2+) serves as cofactor. As to expression, weakly expressed in various tissues. Highest expression in prostate, testis, ovary, intestine, muscle, and in fetal brain.

It is found in the golgi apparatus. It localises to the golgi stack membrane. It carries out the reaction D-glucose + UDP-alpha-D-galactose = lactose + UDP + H(+). It catalyses the reaction an N-acetyl-beta-D-glucosaminyl derivative + UDP-alpha-D-galactose = a beta-D-galactosyl-(1-&gt;4)-N-acetyl-beta-D-glucosaminyl derivative + UDP + H(+). The catalysed reaction is N-acetyl-D-glucosamine + UDP-alpha-D-galactose = beta-D-galactosyl-(1-&gt;4)-N-acetyl-D-glucosamine + UDP + H(+). Its pathway is protein modification; protein glycosylation. Functionally, responsible for the synthesis of complex-type N-linked oligosaccharides in many glycoproteins as well as the carbohydrate moieties of glycolipids. Can produce lactose. The chain is Beta-1,4-galactosyltransferase 2 from Homo sapiens (Human).